The chain runs to 317 residues: Cell division protein FtsQ (317 aa).

Over Met-1–Thr-63 the chain is Cytoplasmic. A helical membrane pass occupies residues Ile-64–Gly-82. Residues His-83–Thr-317 are Periplasmic-facing. In terms of domain architecture, POTRA spans Phe-97–Arg-165.

This sequence belongs to the FtsQ/DivIB family. FtsQ subfamily.

It is found in the cell inner membrane. In terms of biological role, essential cell division protein. This chain is Cell division protein FtsQ, found in Agrobacterium fabrum (strain C58 / ATCC 33970) (Agrobacterium tumefaciens (strain C58)).